A 749-amino-acid chain; its full sequence is Poly(U)-binding-splicing factor rnp-6 (749 aa).

RRM domains follow at residues 102–176 (SRIY…LKVN) and 207–285 (FRVY…KCVT). Disordered stretches follow at residues 323 to 388 (AGSS…PDVV) and 457 to 480 (IEEE…KMKR). A compositionally biased stretch (low complexity) spans 330 to 354 (PSESGGSRAASPAPRAQSPATPSSS). An RRM 3; atypical domain is found at 658–739 (NVIVLRNMVT…NTVKAEAYDQ (82 aa)).

This sequence belongs to the RRM half pint family.

Its subcellular location is the nucleus. In terms of biological role, DNA- and RNA-binding protein, involved in several nuclear processes such as pre-mRNA splicing, apoptosis and transcription regulation. Ensures the correct splicing of genes involved in immunity to promote longevity in response to infection by pathogenic bacteria such as S.aureus. The protein is Poly(U)-binding-splicing factor rnp-6 of Caenorhabditis elegans.